The chain runs to 78 residues: Acyl carrier protein BQ2027_MB0103 (78 aa).

The Carrier domain occupies 1–78; sequence MRDRILAAVC…ELEAVCTEFG (78 aa). The residue at position 35 (Ser35) is an O-(pantetheine 4'-phosphoryl)serine.

Belongs to the acyl carrier protein (ACP) family. It depends on pantetheine 4'-phosphate as a cofactor.

It participates in lipid metabolism; fatty acid metabolism. In terms of biological role, acyl-carrier protein (ACP) involved in the biosynthesis of a unique class of isonitrile lipopeptides (INLPs) that seem to play a role in metal acquisition. Is the dedicated ACP for the loading of activated acyl groups catalyzed by FadD10. The sequence is that of Acyl carrier protein BQ2027_MB0103 from Mycobacterium bovis (strain ATCC BAA-935 / AF2122/97).